A 1523-amino-acid chain; its full sequence is Slit homolog 3 protein (1523 aa).

A signal peptide spans 1–33 (MALGRTGAGAAVRARLALGLALASILSGPPAAA). Residues 34–61 (CPTKCTCSAASVDCHGLGLRAVPRGIPR) enclose the LRRNT domain. LRR repeat units follow at residues 62–83 (NAER…DFAG), 86–107 (NLRV…AFQD), 110–131 (QLER…LFQS), 134–155 (KLTR…AFRG), 158–179 (GVKN…AFRA), and 182–203 (DLEI…SFNH). N-linked (GlcNAc...) asparagine glycosylation is present at N72. N192 is a glycosylation site (N-linked (GlcNAc...) asparagine). The 51-residue stretch at 215–265 (NHLYCDCHLAWLSDWLRQRRTIGQFTLCMAPVHLRGFSVADVQKKEYVCPG) folds into the LRRCT 1 domain. One can recognise an LRRNT 2 domain in the interval 271–307 (PACNANSLSCPSACSCSNNIVDCRGKGLTEIPANLPE). A disulfide bridge connects residues C284 and C293. LRR repeat units lie at residues 308–329 (GIVE…AFTQ), 332–353 (KLKR…AFQG), 356–377 (SLTS…LFDG), 380–401 (SLQL…TFQD), and 404–425 (NLNL…LFVP). In terms of domain architecture, LRRCT 2 spans 437–487 (NPFVCDCHLKWLADYLQDNPIETSGARCSSPRRLANKRISQIKSKKFRCSG). Disulfide bonds link C441-C464, C443-C485, C505-C511, and C509-C518. The 37-residue stretch at 496–532 (SSECFMDLVCPEKCRCEGTIVDCSNQKLARIPSHLPE) folds into the LRRNT 3 domain. LRR repeat units follow at residues 533–554 (YTTD…GIFK), 558–579 (NLRK…AFDG), 582–603 (GVQE…MFRG), 606–627 (SLKT…TFAG), and 630–651 (SVRL…AFTT). An N-linked (GlcNAc...) asparagine glycan is attached at N563. The N-linked (GlcNAc...) asparagine glycan is linked to N622. The LRRCT 3 domain maps to 663 to 713 (NPFNCNCHMAWLGRWLRKRRIVSGNPRCQKPFFLKEIPIQDVAIQDFTCDG). 2 disulfide bridges follow: C667-C690 and C669-C711. In terms of domain architecture, LRRNT 4 spans 716–752 (ESSCQLSPRCPEQCTCVETVVRCSNRGLHALPKGMPK). LRR repeat units lie at residues 753–774 (DVTE…LSAF), 776–797 (QLTL…TFSN), 800–821 (HLST…AFNG), and 824–845 (SLRV…SFND). Residues N784, N792, and N797 are each glycosylated (N-linked (GlcNAc...) asparagine). Residues 857–907 (NPLHCDCSLRWLSEWVKAGYKEPGIARCSSPESMADRLLLTTPTHRFQCKG) enclose the LRRCT 4 domain. EGF-like domains are found at residues 918–953 (NACL…KDCT), 955–994 (PINT…QRCE), 996–1032 (NPDD…ELCD), 1034–1072 (VIDY…KLCE), 1074–1110 (NNDD…LFCE), and 1119–1155 (QTSP…PRCE). 18 cysteine pairs are disulfide-bonded: C920-C931, C925-C941, C943-C952, C959-C970, C964-C982, C984-C993, C1000-C1011, C1005-C1020, C1022-C1031, C1038-C1051, C1045-C1060, C1062-C1071, C1078-C1089, C1083-C1098, C1100-C1109, C1123-C1134, C1128-C1143, and C1145-C1154. A glycan (N-linked (GlcNAc...) asparagine) is linked at N928. N-linked (GlcNAc...) asparagine glycosylation is present at N1025. Positions 1158–1332 (ITVNFVGKDS…PQSLGVSPGC (175 aa)) constitute a Laminin G-like domain. Residues N1181 and N1247 are each glycosylated (N-linked (GlcNAc...) asparagine). Cystine bridges form between C1305–C1332, C1355–C1364, C1372–C1382, C1377–C1391, and C1393–C1402. EGF-like domains follow at residues 1340–1365 (HGLC…PLCD) and 1368–1403 (ARDP…ALCD). An N-linked (GlcNAc...) asparagine glycan is attached at N1406. Residues 1408-1444 (SASACSAFKCHHGQCHISDRGEPYCLCQPGFSGHHCE) form the EGF-like 9 domain. Cystine bridges form between C1412-C1422, C1417-C1432, C1434-C1443, C1449-C1487, C1467-C1501, C1478-C1517, and C1482-C1519. One can recognise a CTCK domain in the interval 1449-1523 (CMGEIVREAI…HLECGCRACS (75 aa)).

Its subcellular location is the secreted. Functionally, may act as molecular guidance cue in cellular migration, and function may be mediated by interaction with roundabout homolog receptors. In Mus musculus (Mouse), this protein is Slit homolog 3 protein (Slit3).